A 164-amino-acid polypeptide reads, in one-letter code: Anterior gradient protein 2 (164 aa).

An N-terminal signal peptide occupies residues 1 to 20 (METVLKTLFVLLVATSLTLA). 2 short sequence motifs (homodimer stabilization; interchain) span residues 34 to 43 (SRGWGDNLEW) and 49 to 56 (EGLYKAKT).

It belongs to the AGR family. In terms of assembly, monomer and homodimer.

The protein resides in the secreted. The protein localises to the endoplasmic reticulum. The chain is Anterior gradient protein 2 from Xenopus tropicalis (Western clawed frog).